The sequence spans 127 residues: Large ribosomal subunit protein bL12 (127 aa).

The protein belongs to the bacterial ribosomal protein bL12 family. Homodimer. Part of the ribosomal stalk of the 50S ribosomal subunit. Forms a multimeric L10(L12)X complex, where L10 forms an elongated spine to which 2 to 4 L12 dimers bind in a sequential fashion. Binds GTP-bound translation factors.

Functionally, forms part of the ribosomal stalk which helps the ribosome interact with GTP-bound translation factors. Is thus essential for accurate translation. This chain is Large ribosomal subunit protein bL12, found in Chloroherpeton thalassium (strain ATCC 35110 / GB-78).